A 147-amino-acid polypeptide reads, in one-letter code: Hemoglobin subunit beta-H0 (147 aa).

The 145-residue stretch at 3-147 (HFTAEEKAAI…VATALSHKYH (145 aa)) folds into the Globin domain. Heme b contacts are provided by histidine 64 and histidine 93.

Belongs to the globin family. As to quaternary structure, heterotetramer of two alpha chains and two beta chains. Red blood cells.

This is a minor early embryonic beta chain. This is Hemoglobin subunit beta-H0 (Hbb-bh0) from Mus musculus (Mouse).